Consider the following 347-residue polypeptide: tRNA N6-adenosine threonylcarbamoyltransferase (347 aa).

Residues His-111 and His-115 each contribute to the Fe cation site. Substrate contacts are provided by residues 134 to 138 (LISGG), Asp-167, Gly-180, and Asn-277. Asp-305 lines the Fe cation pocket.

The protein belongs to the KAE1 / TsaD family. Fe(2+) is required as a cofactor.

It localises to the cytoplasm. The catalysed reaction is L-threonylcarbamoyladenylate + adenosine(37) in tRNA = N(6)-L-threonylcarbamoyladenosine(37) in tRNA + AMP + H(+). Required for the formation of a threonylcarbamoyl group on adenosine at position 37 (t(6)A37) in tRNAs that read codons beginning with adenine. Is involved in the transfer of the threonylcarbamoyl moiety of threonylcarbamoyl-AMP (TC-AMP) to the N6 group of A37, together with TsaE and TsaB. TsaD likely plays a direct catalytic role in this reaction. The polypeptide is tRNA N6-adenosine threonylcarbamoyltransferase (Actinobacillus pleuropneumoniae serotype 5b (strain L20)).